The following is a 403-amino-acid chain: Acetate kinase (403 aa).

Mg(2+) is bound at residue asparagine 7. ATP is bound at residue lysine 14. Residue arginine 95 coordinates substrate. Aspartate 152 (proton donor/acceptor) is an active-site residue. ATP is bound by residues histidine 212–glycine 216, aspartate 286–arginine 288, and glycine 335–asparagine 339. A Mg(2+)-binding site is contributed by glutamate 389.

The protein belongs to the acetokinase family. Homodimer. The cofactor is Mg(2+). It depends on Mn(2+) as a cofactor.

It is found in the cytoplasm. The enzyme catalyses acetate + ATP = acetyl phosphate + ADP. The protein operates within metabolic intermediate biosynthesis; acetyl-CoA biosynthesis; acetyl-CoA from acetate: step 1/2. Catalyzes the formation of acetyl phosphate from acetate and ATP. Can also catalyze the reverse reaction. This Desulfovibrio desulfuricans (strain ATCC 27774 / DSM 6949 / MB) protein is Acetate kinase.